A 108-amino-acid polypeptide reads, in one-letter code: MLLFCPGCGNGLIVEEGQRCHRFACNTCPYVHNITRKVTNRKYPKLKEVDDVLGGAAAWENVDSTAESCPKCEHPRAYFMQLQTRSADEPMTTFYKCCNAQCGHRWRD.

Residues C5, C8, C25, C28, C69, and C72 each coordinate Zn(2+). The segment at 5-28 adopts a C4-type zinc-finger fold; the sequence is CPGCGNGLIVEEGQRCHRFACNTC. A TFIIS-type zinc finger spans residues 65–107; it reads TAESCPKCEHPRAYFMQLQTRSADEPMTTFYKCCNAQCGHRWR. The Hairpin signature appears at 88-89; that stretch reads DE. C98 and C102 together coordinate Zn(2+).

Belongs to the archaeal RpoM/eukaryotic RPA12/RPB9/RPC11 RNA polymerase family. Component of the RNA polymerase III complex consisting of 17 subunits: a ten-subunit horseshoe-shaped catalytic core composed of POLR3A/RPC1, POLR3B/RPC2, POLR1C/RPAC1, POLR1D/RPAC2, POLR3K/RPC10, POLR2E/RPABC1, POLR2F/RPABC2, POLR2H/RPABC3, POLR2K/RPABC4 and POLR2L/RPABC5; a mobile stalk composed of two subunits POLR3H/RPC8 and CRCP/RPC9, protruding from the core and functioning primarily in transcription initiation; and additional subunits homologous to general transcription factors of the RNA polymerase II machinery, POLR3C/RPC3-POLR3F/RPC6-POLR3G/RPC7 heterotrimer required for transcription initiation and POLR3D/RPC4-POLR3E/RPC5 heterodimer involved in both transcription initiation and termination.

It localises to the nucleus. Core component of RNA polymerase III (Pol III) which synthesizes small non-coding RNAs using the four ribonucleoside triphosphates as substrates. Can mediate Pol I proofreading of the nascent RNA transcript. Anchors into the Pol III active site to constantly monitor transcription fidelity, cleaves mis-incorporated 5'-ribonucleotides and restarts the transcription process. Once Pol III reaches the poly(dT) termination signal, can induce Pol III clamp opening and transcription termination. Pol III plays an important role in sensing and limiting infection by intracellular bacteria and DNA viruses. Acts as a nuclear and cytosolic DNA sensor involved in innate immune response. Can sense non-self dsDNA that serves as template for transcription into dsRNA. The non-self RNA polymerase III transcripts, such as Epstein-Barr virus-encoded RNAs (EBERs) induce type I interferon and NF-kappa-B through the RIG-I pathway. The polypeptide is DNA-directed RNA polymerase III subunit RPC10 (Homo sapiens (Human)).